A 1051-amino-acid polypeptide reads, in one-letter code: Inactive tyrosine-protein kinase 7 (1051 aa).

The N-terminal stretch at 1–22 is a signal peptide; that stretch reads MAALRALLLLLAVGAQAAIRFA. 7 Ig-like C2-type domains span residues 23 to 105, 115 to 204, 213 to 298, 308 to 388, 393 to 472, 487 to 566, and 573 to 661; these read KEPY…ANAS, SVVL…DNFT, PQAV…KATL, PFSP…LSIT, PKWV…GSIE, PPPQ…ATVQ, and VTFK…AFLY. The Extracellular segment spans residues 23-685; that stretch reads KEPYSQDALH…SHTPYKMIQT (663 aa). Cysteine 40 and cysteine 88 are oxidised to a cystine. Asparagine 103 carries N-linked (GlcNAc...) asparagine glycosylation. An intrachain disulfide couples cysteine 137 to cysteine 187. N-linked (GlcNAc...) asparagine glycosylation is found at asparagine 202, asparagine 255, and asparagine 264. Intrachain disulfides connect cysteine 234–cysteine 282, cysteine 326–cysteine 372, cysteine 414–cysteine 462, cysteine 505–cysteine 551, and cysteine 594–cysteine 645. N-linked (GlcNAc...) asparagine glycans are attached at residues asparagine 444, asparagine 548, and asparagine 627. The chain crosses the membrane as a helical span at residues 686–706; it reads IGLSVGAAVAYIIIVLGLMFY. The Cytoplasmic segment spans residues 707–1051; the sequence is CKKRRKAKRL…LGDSPADSKA (345 aa). Positions 777-1048 constitute a Protein kinase; inactive domain; that stretch reads LQTITTLGRG…AAALGDSPAD (272 aa).

Belongs to the protein kinase superfamily. Tyr protein kinase family. Insulin receptor subfamily. Expressed in bone marrow, spleen, bursa, thymus and brain. Weakly expressed in fibroblasts. Also expressed in embryonic liver.

It is found in the membrane. Functionally, inactive tyrosine kinase involved in Wnt signaling. pathway. The sequence is that of Inactive tyrosine-protein kinase 7 (PTK7) from Gallus gallus (Chicken).